The sequence spans 313 residues: MNATYRHITVLLEEAVSALAPREDGCYLDGTFGRGGHSRALLEKLGAGGRLLGFDKDPQAIQTGKALAAEDGRFVIVQRSFAELGDEVRARGLEGRVDGVLLDLGVSSPQLDDPERGFSFLNDGPLDMRMNPGQGISAAEFIANATEEEIARVFKEYGEERFAKRMARAIVQRRQERPFERTADLAEVITVANPAWEKGKNPATRAFQGLRIHVNNELGDLERGLDAALESLAVGGRLVVISFHSLEDRIVKLFMRKHAKGEADNLPRDLPIRSKVFEPRLKLLGKPQYASEEELKANPRSRSAVMRVAEKLR.

S-adenosyl-L-methionine contacts are provided by residues 35–37 (GGH), Asp-55, Phe-81, Asp-103, and Gln-110.

It belongs to the methyltransferase superfamily. RsmH family.

Its subcellular location is the cytoplasm. It carries out the reaction cytidine(1402) in 16S rRNA + S-adenosyl-L-methionine = N(4)-methylcytidine(1402) in 16S rRNA + S-adenosyl-L-homocysteine + H(+). Functionally, specifically methylates the N4 position of cytidine in position 1402 (C1402) of 16S rRNA. The chain is Ribosomal RNA small subunit methyltransferase H from Pseudomonas aeruginosa (strain ATCC 15692 / DSM 22644 / CIP 104116 / JCM 14847 / LMG 12228 / 1C / PRS 101 / PAO1).